The primary structure comprises 125 residues: Glycoprotein hormones alpha chain (125 aa).

Positions 1–30 are cleaved as a signal peptide; sequence MVSAVTTMGCMKAAGVSLLLLYFLLNAADS. 5 disulfide bridges follow: C41–C64, C44–C93, C61–C114, C65–C116, and C92–C119. 2 N-linked (GlcNAc...) asparagine glycosylation sites follow: N85 and N110.

This sequence belongs to the glycoprotein hormones subunit alpha family. In terms of assembly, heterodimer. Glycoprotein hormones are heterodimers composed of a common alpha chain described here and a unique beta chain which confers their biological specificity to the different hormones.

Its subcellular location is the secreted. Shared alpha chain of heterodimeric glycoprotein hormones. These hormones bind specific receptors on target cells that in turn activate downstream signaling pathways. Involved in gametogenesis and steroidogenesis. In Fundulus heteroclitus (Killifish), this protein is Glycoprotein hormones alpha chain (cga).